The sequence spans 263 residues: Orotidine 5'-phosphate decarboxylase (263 aa).

Residues D38, 60–62, 91–100, Y213, and R232 contribute to the substrate site; these read KTH and DRKFADIGNT. The Proton donor role is filled by K93.

The protein belongs to the OMP decarboxylase family.

It carries out the reaction orotidine 5'-phosphate + H(+) = UMP + CO2. Its pathway is pyrimidine metabolism; UMP biosynthesis via de novo pathway; UMP from orotate: step 2/2. This is Orotidine 5'-phosphate decarboxylase (PYR4) from Rhizomucor pusillus.